Consider the following 390-residue polypeptide: tRNA(Met) cytidine acetate ligase (390 aa).

Residues 7–20, glycine 101, asparagine 162, and arginine 187 contribute to the ATP site; that span reads VVEY…HKLH.

This sequence belongs to the TmcAL family.

The protein localises to the cytoplasm. The catalysed reaction is cytidine(34) in elongator tRNA(Met) + acetate + ATP = N(4)-acetylcytidine(34) in elongator tRNA(Met) + AMP + diphosphate. In terms of biological role, catalyzes the formation of N(4)-acetylcytidine (ac(4)C) at the wobble position of elongator tRNA(Met), using acetate and ATP as substrates. First activates an acetate ion to form acetyladenylate (Ac-AMP) and then transfers the acetyl group to tRNA to form ac(4)C34. The polypeptide is tRNA(Met) cytidine acetate ligase (Listeria monocytogenes serovar 1/2a (strain ATCC BAA-679 / EGD-e)).